The following is a 564-amino-acid chain: Proline--tRNA ligase 1 (564 aa).

The protein belongs to the class-II aminoacyl-tRNA synthetase family. ProS type 1 subfamily. As to quaternary structure, homodimer.

The protein resides in the cytoplasm. It carries out the reaction tRNA(Pro) + L-proline + ATP = L-prolyl-tRNA(Pro) + AMP + diphosphate. Its function is as follows. Catalyzes the attachment of proline to tRNA(Pro) in a two-step reaction: proline is first activated by ATP to form Pro-AMP and then transferred to the acceptor end of tRNA(Pro). As ProRS can inadvertently accommodate and process non-cognate amino acids such as alanine and cysteine, to avoid such errors it has two additional distinct editing activities against alanine. One activity is designated as 'pretransfer' editing and involves the tRNA(Pro)-independent hydrolysis of activated Ala-AMP. The other activity is designated 'posttransfer' editing and involves deacylation of mischarged Ala-tRNA(Pro). The misacylated Cys-tRNA(Pro) is not edited by ProRS. The chain is Proline--tRNA ligase 1 from Streptomyces avermitilis (strain ATCC 31267 / DSM 46492 / JCM 5070 / NBRC 14893 / NCIMB 12804 / NRRL 8165 / MA-4680).